A 321-amino-acid chain; its full sequence is Opticin (321 aa).

A signal peptide spans 1–19 (MKLLALLSLLILMLQEART). Residue tyrosine 61 is modified to Sulfotyrosine. One can recognise an LRRNT domain in the interval 105–142 (LLAAPANHGLPTCLICVCLGSSVYCDDADLENIPPLPQ). LRR repeat units follow at residues 143–164 (TTAY…DFKG), 167–188 (KLKR…ALRL), 191–212 (ALRD…PTSI), 237–258 (KLQF…LPLS), 259–279 (LRSL…AFCD), and 289–309 (PLED…PSAY). A disulfide bond links cysteine 278 and cysteine 311. N-linked (GlcNAc...) asparagine glycosylation is present at asparagine 301.

The protein belongs to the small leucine-rich proteoglycan (SLRP) family. SLRP class III subfamily. In terms of assembly, homodimer. In terms of processing, O-glycosylated (sialylated oligosaccharides). Post-translationally, sulfated on tyrosine residues. Proteolytically cleaved by MMP1, MMP2, MMP3, MMP7, MMP8, MMP9, ADAMTS4, and ADAMTS5. Proteolytically cleaved by MMP13.

It is found in the secreted. The protein localises to the extracellular space. The protein resides in the extracellular matrix. Functionally, inhibits angiogenesis in the vitreous humor of the eye, and therefore represses neovascularization. Binds collagen fibrils. May be involved in collagen fiber organization via regulation of other members of the small leucine-rich repeat proteoglycan superfamily. In Bos taurus (Bovine), this protein is Opticin (OPTC).